Here is a 329-residue protein sequence, read N- to C-terminus: Transcription factor MYB2 (329 aa).

HTH myb-type domains are found at residues 17 to 69 (GGDL…LNYL) and 70 to 124 (RPDL…QKHA). DNA-binding regions (H-T-H motif) lie at residues 45 to 69 (WNSL…LNYL) and 97 to 120 (WSKI…RTRV). Composition is skewed to low complexity over residues 155–166 (AAAGQQQQQEGG) and 217–235 (LSST…GAGA). 2 disordered regions span residues 155–189 (AAAG…PELP) and 206–242 (GAQS…WPTQ).

As to expression, highly expressed in leaves. Expressed in roots and shoots. Expressed at low levels in flowers.

Its subcellular location is the nucleus. Transcription factor involved in abiotic stress responses. Plays a regulatory role in tolerance to salt, cold, and drought stresses. Positively regulates the expression of genes involved in proline synthesis and transport, and genes involved in reactive oxygen species (ROS) scavenging such as peroxidase, superoxide dismutase and catalase during salt stress. Transactivates stress-related genes, including LEA3, RAB16A and DREB2A during salt stress. The sequence is that of Transcription factor MYB2 from Oryza sativa subsp. japonica (Rice).